We begin with the raw amino-acid sequence, 291 residues long: Probable cell wall amidase LytH (291 aa).

Positions 1 to 40 (MKKFNDWLEKHNLRNIPTLIVVVAFVLFVFMTIAFLNHND) are cleaved as a signal peptide. An SH3b domain is found at 41 to 105 (EDSSTIYITE…WVAGWHTNLN (65 aa)). Positions 109 to 146 (DKNPNAKPLKDKTIVLDPGHGGSDQGASSNTHKKSKEK) are disordered. The MurNAc-LAA domain occupies 122 to 286 (IVLDPGHGGS…VEQAIVEGLR (165 aa)).

It belongs to the N-acetylmuramoyl-L-alanine amidase 3 family.

The protein resides in the secreted. In terms of biological role, probably involved in cell-wall metabolism. This Staphylococcus saprophyticus subsp. saprophyticus (strain ATCC 15305 / DSM 20229 / NCIMB 8711 / NCTC 7292 / S-41) protein is Probable cell wall amidase LytH (lytH).